We begin with the raw amino-acid sequence, 374 residues long: Chaperone protein DnaJ (374 aa).

A J domain is found at 4–68 (DYYDILGVSR…ETRARYDRFG (65 aa)). The CR-type zinc-finger motif lies at 133 to 215 (GGEKQIRITH…CGGNGQAQVT (83 aa)). Zn(2+)-binding residues include C146, C149, C163, C166, C189, C192, C203, and C206. CXXCXGXG motif repeat units follow at residues 146-153 (CTTCNGSG), 163-170 (CGTCGGAG), 189-196 (CPTCNGKG), and 203-210 (CETCGGNG).

The protein belongs to the DnaJ family. Homodimer. It depends on Zn(2+) as a cofactor.

The protein localises to the cytoplasm. Its function is as follows. Participates actively in the response to hyperosmotic and heat shock by preventing the aggregation of stress-denatured proteins and by disaggregating proteins, also in an autonomous, DnaK-independent fashion. Unfolded proteins bind initially to DnaJ; upon interaction with the DnaJ-bound protein, DnaK hydrolyzes its bound ATP, resulting in the formation of a stable complex. GrpE releases ADP from DnaK; ATP binding to DnaK triggers the release of the substrate protein, thus completing the reaction cycle. Several rounds of ATP-dependent interactions between DnaJ, DnaK and GrpE are required for fully efficient folding. Also involved, together with DnaK and GrpE, in the DNA replication of plasmids through activation of initiation proteins. The protein is Chaperone protein DnaJ of Cyanothece sp. (strain PCC 7425 / ATCC 29141).